The chain runs to 503 residues: Lysine--tRNA ligase (503 aa).

2 residues coordinate Mg(2+): E414 and E421.

Belongs to the class-II aminoacyl-tRNA synthetase family. Homodimer. Mg(2+) serves as cofactor.

It localises to the cytoplasm. The catalysed reaction is tRNA(Lys) + L-lysine + ATP = L-lysyl-tRNA(Lys) + AMP + diphosphate. The sequence is that of Lysine--tRNA ligase from Neisseria meningitidis serogroup A / serotype 4A (strain DSM 15465 / Z2491).